We begin with the raw amino-acid sequence, 170 residues long: Adenine phosphoribosyltransferase (170 aa).

The protein belongs to the purine/pyrimidine phosphoribosyltransferase family. Homodimer.

The protein resides in the cytoplasm. It carries out the reaction AMP + diphosphate = 5-phospho-alpha-D-ribose 1-diphosphate + adenine. It participates in purine metabolism; AMP biosynthesis via salvage pathway; AMP from adenine: step 1/1. Its function is as follows. Catalyzes a salvage reaction resulting in the formation of AMP, that is energically less costly than de novo synthesis. In Pseudothermotoga lettingae (strain ATCC BAA-301 / DSM 14385 / NBRC 107922 / TMO) (Thermotoga lettingae), this protein is Adenine phosphoribosyltransferase.